A 58-amino-acid polypeptide reads, in one-letter code: Ribulose bisphosphate carboxylase large chain (58 aa).

A propeptide spanning residues 1–2 (MS) is cleaved from the precursor. The residue at position 3 (Pro-3) is an N-acetylproline. An N6,N6,N6-trimethyllysine modification is found at Lys-14.

It belongs to the RuBisCO large chain family. Type I subfamily. As to quaternary structure, heterohexadecamer of 8 large chains and 8 small chains.

It is found in the plastid. The protein localises to the chloroplast. It carries out the reaction 2 (2R)-3-phosphoglycerate + 2 H(+) = D-ribulose 1,5-bisphosphate + CO2 + H2O. The enzyme catalyses D-ribulose 1,5-bisphosphate + O2 = 2-phosphoglycolate + (2R)-3-phosphoglycerate + 2 H(+). RuBisCO catalyzes two reactions: the carboxylation of D-ribulose 1,5-bisphosphate, the primary event in carbon dioxide fixation, as well as the oxidative fragmentation of the pentose substrate in the photorespiration process. Both reactions occur simultaneously and in competition at the same active site. This Weinmannia silvicola (Towai) protein is Ribulose bisphosphate carboxylase large chain (rbcL).